Consider the following 239-residue polypeptide: Serine protease SplC (239 aa).

The first 36 residues, 1 to 36 (MNKNIVIKSMAALAILTSVTGINAAVVEETQQIANA), serve as a signal peptide directing secretion. Active-site charge relay system residues include H75, D113, and S193.

The protein belongs to the peptidase S1B family.

Its subcellular location is the secreted. The protein is Serine protease SplC (splC) of Staphylococcus aureus (strain USA300 / TCH1516).